The primary structure comprises 107 residues: uncharacterized protein (107 aa).

3 helical membrane-spanning segments follow: residues Thr-15 to Ser-35, Leu-43 to Tyr-63, and Tyr-87 to Phe-107.

Its subcellular location is the membrane. This is an uncharacterized protein from Saccharomyces cerevisiae (strain ATCC 204508 / S288c) (Baker's yeast).